Reading from the N-terminus, the 163-residue chain is NADH-quinone oxidoreductase subunit I (163 aa).

4Fe-4S ferredoxin-type domains follow at residues 53 to 83 and 94 to 123; these read LRRYPNGEERCIACKLCEAICPAQAITIEAG and VRYDIDMVKCIYCGFCQEACPVDAIVEGPN. [4Fe-4S] cluster is bound by residues Cys-63, Cys-66, Cys-69, Cys-73, Cys-103, Cys-106, Cys-109, and Cys-113.

The protein belongs to the complex I 23 kDa subunit family. In terms of assembly, NDH-1 is composed of 14 different subunits. Subunits NuoA, H, J, K, L, M, N constitute the membrane sector of the complex. [4Fe-4S] cluster serves as cofactor.

It localises to the cell inner membrane. It carries out the reaction a quinone + NADH + 5 H(+)(in) = a quinol + NAD(+) + 4 H(+)(out). In terms of biological role, NDH-1 shuttles electrons from NADH, via FMN and iron-sulfur (Fe-S) centers, to quinones in the respiratory chain. The immediate electron acceptor for the enzyme in this species is believed to be ubiquinone. Couples the redox reaction to proton translocation (for every two electrons transferred, four hydrogen ions are translocated across the cytoplasmic membrane), and thus conserves the redox energy in a proton gradient. The protein is NADH-quinone oxidoreductase subunit I of Allorhizobium ampelinum (strain ATCC BAA-846 / DSM 112012 / S4) (Agrobacterium vitis (strain S4)).